A 343-amino-acid polypeptide reads, in one-letter code: Squamosa promoter-binding-like protein 11 (343 aa).

The disordered stretch occupies residues 1-48 (MECNPVSSTTSSSLLWDWDATASAEPPPPPGKRGGRDSSSASASAKRG). Composition is skewed to low complexity over residues 7 to 19 (SSTT…WDWD) and 37 to 48 (DSSSASASAKRG). The segment at 64–141 (APRCQVEGCG…SDHNARRRKP (78 aa)) adopts an SBP-type zinc-finger fold. Residues Cys67, Cys72, Cys89, His92, Cys108, Cys111, His115, and Cys127 each contribute to the Zn(2+) site. The Bipartite nuclear localization signal signature appears at 124–140 (KRSCRRRLSDHNARRRK).

Expressed in stems, leaf sheaths, and young panicles.

Its subcellular location is the nucleus. In terms of biological role, trans-acting factor that binds specifically to the consensus nucleotide sequence 5'-TNCGTACAA-3'. May be involved in panicle development. The chain is Squamosa promoter-binding-like protein 11 (SPL11) from Oryza sativa subsp. japonica (Rice).